Consider the following 329-residue polypeptide: Phytochromobilin:ferredoxin oxidoreductase, chloroplastic (329 aa).

A chloroplast-targeting transit peptide spans 1 to 45 (MALSMEFGFSIGSCFKAPNPPVLISASPNKINFTLRRRKKRFLLR).

This sequence belongs to the HY2 family.

The protein resides in the plastid. It is found in the chloroplast. The enzyme catalyses (3Z)-phytochromobilin + 2 oxidized [2Fe-2S]-[ferredoxin] = biliverdin IXalpha + 2 reduced [2Fe-2S]-[ferredoxin] + 2 H(+). Functionally, catalyzes the two-electron reduction of biliverdin IX-alpha to the tetrapyrrole chromophore phytochromobilin (PPhiB). The chain is Phytochromobilin:ferredoxin oxidoreductase, chloroplastic from Arabidopsis thaliana (Mouse-ear cress).